The following is a 488-amino-acid chain: ATP synthase subunit beta (488 aa).

ATP is bound at residue 164 to 171 (GGAGMGKT).

This sequence belongs to the ATPase alpha/beta chains family. In terms of assembly, F-type ATPases have 2 components, CF(1) - the catalytic core - and CF(0) - the membrane proton channel. CF(1) has five subunits: alpha(3), beta(3), gamma(1), delta(1), epsilon(1). CF(0) has four main subunits: a(1), b(1), b'(1) and c(9-12).

It is found in the cellular thylakoid membrane. It catalyses the reaction ATP + H2O + 4 H(+)(in) = ADP + phosphate + 5 H(+)(out). Its function is as follows. Produces ATP from ADP in the presence of a proton gradient across the membrane. The catalytic sites are hosted primarily by the beta subunits. The polypeptide is ATP synthase subunit beta (Synechococcus sp. (strain RCC307)).